The sequence spans 261 residues: MEREIVSIDAGWWVVSEEHKIWLPAGELPHGDAASLGLAGSSGSRIGEWQGEAVWLIRGSRPDDMGSLRQLLDRDSALFRLAGRGIQLAEFFRSHQWCGYCGHKMHNSRTEWACLCHHCRQRYYPQIAPCIIVAIRRGAEILLAQHTRHRNGIYTVLAGFVEVGETLEQTVAREVMEESSIKVKNLRYVTSQPWPFPQSLMVAFMADYDDGEISIDRKELIDAGWYRYDALPLLPPAGTVARRLIEDTVALCRAQEENGER.

Residue arginine 69 coordinates substrate. Positions 98 and 101 each coordinate Zn(2+). Glutamate 111 is a substrate binding site. The Zn(2+) site is built by cysteine 116 and cysteine 119. Substrate is bound at residue tyrosine 124. Positions 125–248 (PQIAPCIIVA…TVARRLIEDT (124 aa)) constitute a Nudix hydrolase domain. A divalent metal cation is bound by residues alanine 158, glutamate 174, and glutamate 178. The Nudix box motif lies at 159–180 (GFVEVGETLEQTVAREVMEESS). 192 to 199 (QPWPFPQS) provides a ligand contact to substrate. An a divalent metal cation-binding site is contributed by glutamate 219. Alanine 241 is a binding site for substrate.

It belongs to the Nudix hydrolase family. NudC subfamily. As to quaternary structure, homodimer. Mg(2+) is required as a cofactor. It depends on Mn(2+) as a cofactor. The cofactor is Zn(2+).

It carries out the reaction a 5'-end NAD(+)-phospho-ribonucleoside in mRNA + H2O = a 5'-end phospho-adenosine-phospho-ribonucleoside in mRNA + beta-nicotinamide D-ribonucleotide + 2 H(+). It catalyses the reaction NAD(+) + H2O = beta-nicotinamide D-ribonucleotide + AMP + 2 H(+). The catalysed reaction is NADH + H2O = reduced beta-nicotinamide D-ribonucleotide + AMP + 2 H(+). MRNA decapping enzyme that specifically removes the nicotinamide adenine dinucleotide (NAD) cap from a subset of mRNAs by hydrolyzing the diphosphate linkage to produce nicotinamide mononucleotide (NMN) and 5' monophosphate mRNA. The NAD-cap is present at the 5'-end of some mRNAs and stabilizes RNA against 5'-processing. Has preference for mRNAs with a 5'-end purine. Catalyzes the hydrolysis of a broad range of dinucleotide pyrophosphates. This Erwinia tasmaniensis (strain DSM 17950 / CFBP 7177 / CIP 109463 / NCPPB 4357 / Et1/99) protein is NAD-capped RNA hydrolase NudC.